The sequence spans 228 residues: Probable septum site-determining protein MinC (228 aa).

This sequence belongs to the MinC family. Interacts with MinD and FtsZ.

Its function is as follows. Cell division inhibitor that blocks the formation of polar Z ring septums. Rapidly oscillates between the poles of the cell to destabilize FtsZ filaments that have formed before they mature into polar Z rings. Prevents FtsZ polymerization. This is Probable septum site-determining protein MinC from Yersinia enterocolitica serotype O:8 / biotype 1B (strain NCTC 13174 / 8081).